The following is a 127-amino-acid chain: Glycine cleavage system H protein (127 aa).

Residues 24–105 (TALVGITDFA…YEDGWMVKVS (82 aa)) form the Lipoyl-binding domain. An N6-lipoyllysine modification is found at Lys65.

It belongs to the GcvH family. The glycine cleavage system is composed of four proteins: P, T, L and H. (R)-lipoate serves as cofactor.

In terms of biological role, the glycine cleavage system catalyzes the degradation of glycine. The H protein shuttles the methylamine group of glycine from the P protein to the T protein. The protein is Glycine cleavage system H protein of Prosthecochloris aestuarii (strain DSM 271 / SK 413).